A 320-amino-acid polypeptide reads, in one-letter code: Malate dehydrogenase (320 aa).

Residues 10–15 (GAGQIG) and Asp34 contribute to the NAD(+) site. Residues Arg83 and Arg89 each coordinate substrate. NAD(+) is bound by residues Asn96 and 119–121 (ITN). Residues Asn121 and Arg152 each contribute to the substrate site. Residue His176 is the Proton acceptor of the active site.

It belongs to the LDH/MDH superfamily. MDH type 3 family.

The enzyme catalyses (S)-malate + NAD(+) = oxaloacetate + NADH + H(+). Functionally, catalyzes the reversible oxidation of malate to oxaloacetate. The chain is Malate dehydrogenase from Beijerinckia indica subsp. indica (strain ATCC 9039 / DSM 1715 / NCIMB 8712).